A 557-amino-acid chain; its full sequence is Dihydroxy-acid dehydratase (557 aa).

D78 contributes to the Mg(2+) binding site. C119 serves as a coordination point for [2Fe-2S] cluster. Residues D120 and K121 each contribute to the Mg(2+) site. K121 is subject to N6-carboxylysine. C192 contributes to the [2Fe-2S] cluster binding site. E442 provides a ligand contact to Mg(2+). The active-site Proton acceptor is the S468.

It belongs to the IlvD/Edd family. As to quaternary structure, homodimer. Requires [2Fe-2S] cluster as cofactor. Mg(2+) serves as cofactor.

It carries out the reaction (2R)-2,3-dihydroxy-3-methylbutanoate = 3-methyl-2-oxobutanoate + H2O. It catalyses the reaction (2R,3R)-2,3-dihydroxy-3-methylpentanoate = (S)-3-methyl-2-oxopentanoate + H2O. It functions in the pathway amino-acid biosynthesis; L-isoleucine biosynthesis; L-isoleucine from 2-oxobutanoate: step 3/4. The protein operates within amino-acid biosynthesis; L-valine biosynthesis; L-valine from pyruvate: step 3/4. In terms of biological role, functions in the biosynthesis of branched-chain amino acids. Catalyzes the dehydration of (2R,3R)-2,3-dihydroxy-3-methylpentanoate (2,3-dihydroxy-3-methylvalerate) into 2-oxo-3-methylpentanoate (2-oxo-3-methylvalerate) and of (2R)-2,3-dihydroxy-3-methylbutanoate (2,3-dihydroxyisovalerate) into 2-oxo-3-methylbutanoate (2-oxoisovalerate), the penultimate precursor to L-isoleucine and L-valine, respectively. This Bacillus anthracis (strain A0248) protein is Dihydroxy-acid dehydratase.